We begin with the raw amino-acid sequence, 605 residues long: F-box/WD repeat-containing protein 1A (605 aa).

A homodimerization domain D region spans residues 128-177 (ASYEKEKELCVKYFEQWSESDQVEFVEHLISQMCHYQHGHINSYLKPMLQ). In terms of domain architecture, F-box spans 190–228 (DHIAENILSYLDAKSLCAAELVCKEWYRVTSDGMLWKKL). Residues 190-228 (DHIAENILSYLDAKSLCAAELVCKEWYRVTSDGMLWKKL) are required for down-regulation of SNAI1. 7 WD repeats span residues 301–338 (ETSK…CKRI), 341–378 (GHTG…MLNT), 381–418 (HHCE…DITL), 424–461 (GHRA…FVRT), 464–503 (GHKR…RVLE), 505–541 (HEEL…DPRA), and 553–590 (EHSG…AAQA).

Homodimer. Self-associates. Component of the SCF(BTRC) complex formed of CUL1, SKP1, RBX1 and a BTRC dimer. Direct interaction with SKP1 occurs via the F-box domain. Interacts with phosphorylated ubiquitination substrates SMAD3 and SMAD4. Interacts with phosphorylated ubiquitination substrates CTNNB1, NFKBIA, NFKBIB, NFKBIE, NFKB1/nuclear factor NF-kappa-B p105 subunit, ATF4, CDC25A, DLG1, FBXO5 and SNAI1; the interaction requires the phosphorylation of the 2 serine residues in the substrate destruction motif D-S-G-X(2,3,4)-S. Binds UBQLN1. Interacts with CDC34 and UBE2R2. Interacts with FBXW11. Interacts with CUL4A and DDB1. Part of a SCF(BTRC)-like complex lacking CUL1, which is associated with phosphorylated NKBIA and RELA; RELA interacts directly with NFKBIA. Interacts with the phosphorylated form of GLI3. Interacts with CLU. Interacts with PER1 (phosphorylated), PER2 (phosphorylated) and PER3. Interacts with phosphorylated ubiquitination substrate CEP68. Interacts with ZC3H12A; this interaction occurs when ZC3H12A is phosphorylated in a IKBKB/IKKB-dependent manner. Interacts with HSF1; this interaction occurs during mitosis and induces HSF1 ubiquitin-dependent degradation, a process inhibited by CDC20. Interacts with NFE2L1. Interacts with INAVA. Interacts with IL10RA; this interaction leads to IL10RA ubiquitination and subsequent degradation. Interacts with REST. Interacts with KLF4; this interaction leads to KLF4 ubiquitination and subsequent degradation. Interacts with UBR2, as part of a SCF(BTRC) complex; the interaction mediates 'Lys-48'-linked ubiquitination of UBR2 and is regulated by DUSP22 in the T-cell receptor signaling pathway. In terms of assembly, (Microbial infection) Interacts with vaccinia virus A49; this interaction inhibits NF-kappa-B activation. As to quaternary structure, (Microbial infection) Interacts with HIV-1 Vpu. Ubiquitinated. Deubiquitinated by OTUD5, promoting its stability. Expressed in epididymis (at protein level).

The protein localises to the cytoplasm. It localises to the nucleus. The protein operates within protein modification; protein ubiquitination. Functionally, substrate recognition component of a SCF (SKP1-CUL1-F-box protein) E3 ubiquitin-protein ligase complex which mediates the ubiquitination and subsequent proteasomal degradation of target proteins. Recognizes and binds to phosphorylated target proteins. SCF(BTRC) mediates the ubiquitination of CTNNB1 and participates in Wnt signaling. SCF(BTRC) mediates the ubiquitination of phosphorylated NFKB1, ATF4, CDC25A, DLG1, FBXO5, PER1, SMAD3, SMAD4, SNAI1 and probably NFKB2. SCF(BTRC) mediates the ubiquitination of NFKBIA, NFKBIB and NFKBIE; the degradation frees the associated NFKB1 to translocate into the nucleus and to activate transcription. Ubiquitination of NFKBIA occurs at 'Lys-21' and 'Lys-22'. The SCF(FBXW11) complex also regulates NF-kappa-B by mediating ubiquitination of phosphorylated NFKB1: specifically ubiquitinates the p105 form of NFKB1, leading to its degradation. SCF(BTRC) mediates the ubiquitination of CEP68; this is required for centriole separation during mitosis. SCF(BTRC) mediates the ubiquitination and subsequent degradation of nuclear NFE2L1. Has an essential role in the control of the clock-dependent transcription via degradation of phosphorylated PER1 and PER2. May be involved in ubiquitination and subsequent proteasomal degradation through a DBB1-CUL4 E3 ubiquitin-protein ligase. Required for activation of NFKB-mediated transcription by IL1B, MAP3K14, MAP3K1, IKBKB and TNF. Required for proteolytic processing of GLI3. Mediates ubiquitination of REST, thereby leading to its proteasomal degradation. SCF(BTRC) mediates the ubiquitination and subsequent proteasomal degradation of KLF4; thereby negatively regulating cell pluripotency maintenance and embryogenesis. SCF(BTRC) acts as a regulator of mTORC1 signaling pathway by catalyzing ubiquitination and subsequent proteasomal degradation of phosphorylated DEPTOR, TFE3 and MITF. SCF(BTRC) directs 'Lys-48'-linked ubiquitination of UBR2 in the T-cell receptor signaling pathway. This chain is F-box/WD repeat-containing protein 1A (BTRC), found in Homo sapiens (Human).